A 307-amino-acid chain; its full sequence is Ras-related protein RabR (307 aa).

Polar residues predominate over residues 1–10 (MTTTTLLSES). The segment at 1-45 (MTTTTLLSESTNNSNNTNNNTNNNTNNTMNNNNNNNNNNTIGNNN) is disordered. Residues 11–45 (TNNSNNTNNNTNNNTNNTMNNNNNNNNNNTIGNNN) show a composition bias toward low complexity. GTP is bound at residue 61 to 68 (GDEEVGKG). Positions 83–92 (ENLYNIEVDR) match the Effector region motif. GTP is bound at residue 122–126 (NFHMH). Low complexity predominate over residues 175 to 185 (NFNCQSNSRNS). Residues 175-223 (NFNCQSNSRNSTNYNRHSVGNHCPNSPQKGEKENNTHSSTAPPAPPPLP) are disordered. Over residues 186 to 202 (TNYNRHSVGNHCPNSPQ) the composition is skewed to polar residues. 230-233 (NKCD) contacts GTP. Cys304 is modified (cysteine methyl ester). The S-geranylgeranyl cysteine moiety is linked to residue Cys304. Positions 305–307 (NLM) are cleaved as a propeptide — removed in mature form.

The protein belongs to the small GTPase superfamily. Rab family.

The protein resides in the cell membrane. The sequence is that of Ras-related protein RabR (rabR) from Dictyostelium discoideum (Social amoeba).